Here is a 425-residue protein sequence, read N- to C-terminus: Serine--tRNA ligase (425 aa).

230-232 provides a ligand contact to L-serine; the sequence is TSE. Residues 261–263 and Val277 each bind ATP; that span reads RRE. Glu284 contributes to the L-serine binding site. An ATP-binding site is contributed by 348 to 351; that stretch reads ELTS. Residue Thr382 participates in L-serine binding.

This sequence belongs to the class-II aminoacyl-tRNA synthetase family. Type-1 seryl-tRNA synthetase subfamily. As to quaternary structure, homodimer. The tRNA molecule binds across the dimer.

The protein resides in the cytoplasm. It carries out the reaction tRNA(Ser) + L-serine + ATP = L-seryl-tRNA(Ser) + AMP + diphosphate + H(+). The enzyme catalyses tRNA(Sec) + L-serine + ATP = L-seryl-tRNA(Sec) + AMP + diphosphate + H(+). It participates in aminoacyl-tRNA biosynthesis; selenocysteinyl-tRNA(Sec) biosynthesis; L-seryl-tRNA(Sec) from L-serine and tRNA(Sec): step 1/1. Catalyzes the attachment of serine to tRNA(Ser). Is also able to aminoacylate tRNA(Sec) with serine, to form the misacylated tRNA L-seryl-tRNA(Sec), which will be further converted into selenocysteinyl-tRNA(Sec). This chain is Serine--tRNA ligase, found in Streptomyces coelicolor (strain ATCC BAA-471 / A3(2) / M145).